A 264-amino-acid chain; its full sequence is Thiazole synthase (264 aa).

Catalysis depends on lysine 104, which acts as the Schiff-base intermediate with DXP. 1-deoxy-D-xylulose 5-phosphate-binding positions include glycine 165, alanine 191 to glycine 192, and asparagine 213 to threonine 214.

Belongs to the ThiG family. In terms of assembly, homotetramer. Forms heterodimers with either ThiH or ThiS.

The protein localises to the cytoplasm. The enzyme catalyses [ThiS sulfur-carrier protein]-C-terminal-Gly-aminoethanethioate + 2-iminoacetate + 1-deoxy-D-xylulose 5-phosphate = [ThiS sulfur-carrier protein]-C-terminal Gly-Gly + 2-[(2R,5Z)-2-carboxy-4-methylthiazol-5(2H)-ylidene]ethyl phosphate + 2 H2O + H(+). It functions in the pathway cofactor biosynthesis; thiamine diphosphate biosynthesis. In terms of biological role, catalyzes the rearrangement of 1-deoxy-D-xylulose 5-phosphate (DXP) to produce the thiazole phosphate moiety of thiamine. Sulfur is provided by the thiocarboxylate moiety of the carrier protein ThiS. In vitro, sulfur can be provided by H(2)S. This is Thiazole synthase from Oleidesulfovibrio alaskensis (strain ATCC BAA-1058 / DSM 17464 / G20) (Desulfovibrio alaskensis).